The primary structure comprises 432 residues: Adenylosuccinate synthetase (432 aa).

Residues 13-19 (GDEGKGK) and 41-43 (GHT) contribute to the GTP site. The active-site Proton acceptor is D14. Mg(2+) is bound by residues D14 and G41. IMP-binding positions include 14-17 (DEGK), 39-42 (NAGH), T130, R144, Q225, T240, and R304. The active-site Proton donor is H42. A substrate-binding site is contributed by 300 to 306 (AVTGRPR). Residues R306, 332–334 (KLD), and 415–417 (STG) contribute to the GTP site.

It belongs to the adenylosuccinate synthetase family. As to quaternary structure, homodimer. Mg(2+) serves as cofactor.

The protein resides in the cytoplasm. It carries out the reaction IMP + L-aspartate + GTP = N(6)-(1,2-dicarboxyethyl)-AMP + GDP + phosphate + 2 H(+). Its pathway is purine metabolism; AMP biosynthesis via de novo pathway; AMP from IMP: step 1/2. Plays an important role in the de novo pathway of purine nucleotide biosynthesis. Catalyzes the first committed step in the biosynthesis of AMP from IMP. This chain is Adenylosuccinate synthetase, found in Haemophilus influenzae (strain PittGG).